The following is a 231-amino-acid chain: Sensory transduction protein BceR (231 aa).

The Response regulatory domain maps to 3 to 116; sequence KLLLIEDDES…VLIAKIQAMF (114 aa). A 4-aspartylphosphate modification is found at Asp-52. Residues 127 to 225 constitute a DNA-binding region (ompR/PhoB-type); that stretch reads STIKTWCGAA…KVGQGYIAKE (99 aa).

In terms of processing, phosphorylated by BceS.

It is found in the cytoplasm. Its function is as follows. Member of the two-component regulatory system BceS/BceR involved in the regulation of bacitracin resistance. When activated by BceS, binds to the upstream region of the bceAB promoter and up-regulates the expression of these two genes. The chain is Sensory transduction protein BceR (bceR) from Bacillus subtilis (strain 168).